Here is a 122-residue protein sequence, read N- to C-terminus: MIQPQTYLNVADNSGARELMCIRIIGASNRRYAHIGDVIVAVIKEAIPNTPLERSEVIRAVIVRTCKELKRNNGTIIRYDDNAAVVIDQEGNPKGTRVFGAIPRELRQLNFTKIVSLAPEVL.

It belongs to the universal ribosomal protein uL14 family. As to quaternary structure, part of the 50S ribosomal subunit.

It is found in the plastid. It localises to the chloroplast. Binds to 23S rRNA. The polypeptide is Large ribosomal subunit protein uL14c (Lepidium virginicum (Virginia pepperweed)).